Consider the following 313-residue polypeptide: Porphobilinogen deaminase (313 aa).

The residue at position 241 (C241) is an S-(dipyrrolylmethanemethyl)cysteine.

Belongs to the HMBS family. As to quaternary structure, monomer. Dipyrromethane is required as a cofactor.

The catalysed reaction is 4 porphobilinogen + H2O = hydroxymethylbilane + 4 NH4(+). Its pathway is porphyrin-containing compound metabolism; protoporphyrin-IX biosynthesis; coproporphyrinogen-III from 5-aminolevulinate: step 2/4. Tetrapolymerization of the monopyrrole PBG into the hydroxymethylbilane pre-uroporphyrinogen in several discrete steps. In Sulfurimonas denitrificans (strain ATCC 33889 / DSM 1251) (Thiomicrospira denitrificans (strain ATCC 33889 / DSM 1251)), this protein is Porphobilinogen deaminase.